Consider the following 153-residue polypeptide: MSLLFQQTVPLSHLHRSLDPPLCFRTHILLILLLLSRHLPGFTGSDCESADPSIVSAIAPGTATTSERDCPVRTAGSDPVPIGDSGTFFDVGTAAPELLSPNRHHMITRAKDGIRKPNPRYNLFTQKYTPSEPKTITSASQDGDKLCKKRCRH.

The protein localises to the mitochondrion. This is an uncharacterized protein from Arabidopsis thaliana (Mouse-ear cress).